A 204-amino-acid chain; its full sequence is N-alpha-acetyltransferase 40 (204 aa).

The 164-residue stretch at E39–K202 folds into the N-acetyltransferase domain. Substrate contacts are provided by residues Y64, T107–E109, and Y118. Residues I120–L122 and G128–K133 each bind acetyl-CoA. A substrate-binding site is contributed by T154. Residue N159 participates in acetyl-CoA binding. S176 is a substrate binding site.

The protein belongs to the acetyltransferase family. NAA40 subfamily.

It is found in the cytoplasm. It localises to the nucleus. It catalyses the reaction N-terminal L-seryl-[histone H4] + acetyl-CoA = N-terminal N(alpha)-acetyl-L-seryl-[histone H4] + CoA + H(+). The catalysed reaction is N-terminal L-seryl-[histone H2A] + acetyl-CoA = N-terminal N(alpha)-acetyl-L-seryl-[histone H2A] + CoA + H(+). N-alpha-acetyltransferase that specifically mediates the acetylation of the N-terminal residues of histones H4 and H2A. The polypeptide is N-alpha-acetyltransferase 40 (Schizosaccharomyces pombe (strain 972 / ATCC 24843) (Fission yeast)).